The primary structure comprises 234 residues: Ras-related protein Rab-20 (234 aa).

Residues Gly-17, Lys-18, Thr-19, Asp-32, and Thr-36 each coordinate GTP. Thr-19 is a binding site for Mg(2+). 2 consecutive short sequence motifs (switch) follow at residues 28 to 41 and 55 to 72; these read RRFPDTVSTVGGAF and DTAGREQFHGLGSMYCRG. Thr-36 and Asp-55 together coordinate Mg(2+). Gly-58, Asn-113, Lys-114, and Asp-116 together coordinate GTP. The segment at 125–144 is disordered; sequence GQEKEECSPNMDAGDRVSPR. The segment covering 126-142 has biased composition (basic and acidic residues); the sequence is QEKEECSPNMDAGDRVS. Positions 184 and 185 each coordinate GTP. The interval 212–234 is disordered; sequence RPSHTVDISSHKPPKRTRSGCCA. Positions 223–234 are enriched in basic residues; sequence KPPKRTRSGCCA. Residues Cys-232 and Cys-233 are each lipidated (S-geranylgeranyl cysteine).

It belongs to the small GTPase superfamily. Rab family. It depends on Mg(2+) as a cofactor. In terms of tissue distribution, low or absent expression in normal pancreas and stronger expression in 15 of 18 exocrine pancreatic adenocarcinomas (at protein level).

The protein localises to the golgi apparatus. It is found in the cytoplasmic vesicle. It localises to the phagosome. Its subcellular location is the phagosome membrane. The catalysed reaction is GTP + H2O = GDP + phosphate + H(+). Its activity is regulated as follows. Regulated by guanine nucleotide exchange factors (GEFs) which promote the exchange of bound GDP for free GTP. Regulated by GTPase activating proteins (GAPs) which increase the GTP hydrolysis activity. Inhibited by GDP dissociation inhibitors (GDIs). Its function is as follows. The small GTPases Rab are key regulators of intracellular membrane trafficking, from the formation of transport vesicles to their fusion with membranes. Rabs cycle between an inactive GDP-bound form and an active GTP-bound form that is able to recruit to membranes different sets of downstream effectors directly responsible for vesicle formation, movement, tethering and fusion. RAB20 plays a role in apical endocytosis/recycling. Plays a role in the maturation and acidification of phagosomes that engulf pathogens, such as S.aureus and M.tuberculosis. Plays a role in the fusion of phagosomes with lysosomes. This is Ras-related protein Rab-20 from Homo sapiens (Human).